We begin with the raw amino-acid sequence, 98 residues long: Plastocyanin (98 aa).

The 98-residue stretch at 1 to 98 (AAIVKLGGDD…AGMKMTITVQ (98 aa)) folds into the Plastocyanin-like domain. His38, Cys83, His86, and Met91 together coordinate Cu cation.

Belongs to the plastocyanin family. Requires Cu(2+) as cofactor.

It localises to the plastid. It is found in the chloroplast thylakoid membrane. Participates in electron transfer between P700 and the cytochrome b6-f complex in photosystem I. The protein is Plastocyanin (PETE) of Ulva prolifera (Green seaweed).